Here is a 426-residue protein sequence, read N- to C-terminus: GTPase Obg (426 aa).

Residues 1–158 (MFVDQVSVYV…RNIKVELKLI (158 aa)) enclose the Obg domain. 2 disordered regions span residues 66–86 (GKRGENGMSKTQHGRNADPLV) and 119–146 (GGRGGRGNTRFATPRNPAPDMAENGEPG). Positions 159 to 329 (ADVGLVGFPS…LLFAIADKLE (171 aa)) constitute an OBG-type G domain. Residues 165-172 (GFPSVGKS), 190-194 (FTTLS), 212-215 (DLPG), 282-285 (NKMD), and 310-312 (SAL) contribute to the GTP site. 2 residues coordinate Mg(2+): Ser172 and Thr192. The 79-residue stretch at 348 to 426 (RYQKEEDPFH…LLEYEFEFIE (79 aa)) folds into the OCT domain.

It belongs to the TRAFAC class OBG-HflX-like GTPase superfamily. OBG GTPase family. In terms of assembly, monomer. The cofactor is Mg(2+).

It is found in the cytoplasm. Functionally, an essential GTPase which binds GTP, GDP and possibly (p)ppGpp with moderate affinity, with high nucleotide exchange rates and a fairly low GTP hydrolysis rate. Plays a role in control of the cell cycle, stress response, ribosome biogenesis and in those bacteria that undergo differentiation, in morphogenesis control. This is GTPase Obg from Oceanobacillus iheyensis (strain DSM 14371 / CIP 107618 / JCM 11309 / KCTC 3954 / HTE831).